The chain runs to 688 residues: DNA-directed RNA polymerase subunit beta' (688 aa).

Residues cysteine 69, cysteine 71, cysteine 87, and cysteine 90 each contribute to the Zn(2+) site. Positions 493, 495, and 497 each coordinate Mg(2+).

The protein belongs to the RNA polymerase beta' chain family. RpoC1 subfamily. As to quaternary structure, in plastids the minimal PEP RNA polymerase catalytic core is composed of four subunits: alpha, beta, beta', and beta''. When a (nuclear-encoded) sigma factor is associated with the core the holoenzyme is formed, which can initiate transcription. Mg(2+) is required as a cofactor. Zn(2+) serves as cofactor.

The protein resides in the plastid. The protein localises to the chloroplast. The catalysed reaction is RNA(n) + a ribonucleoside 5'-triphosphate = RNA(n+1) + diphosphate. Its function is as follows. DNA-dependent RNA polymerase catalyzes the transcription of DNA into RNA using the four ribonucleoside triphosphates as substrates. The protein is DNA-directed RNA polymerase subunit beta' of Chloranthus spicatus (Chulantree).